The primary structure comprises 342 residues: Uroporphyrinogen decarboxylase (342 aa).

Substrate is bound by residues 24-28, D74, Y151, S206, and H322; that span reads RQAGR.

This sequence belongs to the uroporphyrinogen decarboxylase family. In terms of assembly, homodimer.

It is found in the cytoplasm. The catalysed reaction is uroporphyrinogen III + 4 H(+) = coproporphyrinogen III + 4 CO2. The protein operates within porphyrin-containing compound metabolism; protoporphyrin-IX biosynthesis; coproporphyrinogen-III from 5-aminolevulinate: step 4/4. Functionally, catalyzes the decarboxylation of four acetate groups of uroporphyrinogen-III to yield coproporphyrinogen-III. The chain is Uroporphyrinogen decarboxylase from Paracoccus denitrificans (strain Pd 1222).